Reading from the N-terminus, the 459-residue chain is Glutathione reductase (459 aa).

Positions 14, 15, 34, 41, 42, 50, and 114 each coordinate FAD. Ser14 serves as a coordination point for glutathione. Cys42 and Cys47 form a disulfide bridge. Residues Ile177, Glu180, Arg197, Lys203, and Gly262 each contribute to the NADP(+) site. Residues Asp313 and Thr321 each contribute to the FAD site. Arg329 provides a ligand contact to glutathione. NADP(+) is bound at residue Ala351. His448 is an FAD binding site. The Proton acceptor role is filled by His448.

It belongs to the class-I pyridine nucleotide-disulfide oxidoreductase family. Homodimer. Requires FAD as cofactor.

Its subcellular location is the cytoplasm. The catalysed reaction is 2 glutathione + NADP(+) = glutathione disulfide + NADPH + H(+). Its function is as follows. Catalyzes the reduction of glutathione disulfide (GSSG) to reduced glutathione (GSH). Constitutes the major mechanism to maintain a high GSH:GSSG ratio in the cytosol. The polypeptide is Glutathione reductase (gor) (Nostoc sp. (strain PCC 7120 / SAG 25.82 / UTEX 2576)).